Reading from the N-terminus, the 516-residue chain is 3-ketoacyl-CoA synthase 4 (516 aa).

2 consecutive transmembrane segments (helical) span residues 48 to 68 (LISNLLTLCLFPLAVVISVEA) and 87 to 107 (LVSIIICSAILVFGLTVYVMT). The 290-residue stretch at 104–393 (YVMTRPRPVY…FFMTLVVKKL (290 aa)) folds into the FAE domain. Residues Cys-248, His-327, His-411, His-415, His-444, and Asn-448 contribute to the active site.

The protein belongs to the thiolase-like superfamily. Chalcone/stilbene synthases family. In terms of tissue distribution, expressed at low levels in siliques, flowers, leaves and stems.

The protein resides in the membrane. The enzyme catalyses a very-long-chain acyl-CoA + malonyl-CoA + H(+) = a very-long-chain 3-oxoacyl-CoA + CO2 + CoA. It functions in the pathway lipid metabolism; fatty acid biosynthesis. This is 3-ketoacyl-CoA synthase 4 from Arabidopsis thaliana (Mouse-ear cress).